Reading from the N-terminus, the 356-residue chain is Phospho-N-acetylmuramoyl-pentapeptide-transferase (356 aa).

A run of 10 helical transmembrane segments spans residues 25–45 (TVAA…SIIS), 70–90 (GTPT…ALLW), 93–113 (LFNI…AIGF), 138–158 (FLVA…GLAL), 164–184 (YFIN…VGLG), 195–215 (GLAI…AYLS), 232–252 (VGEL…FLWF), 258–278 (AIFM…IVSV), 284–304 (IVLI…IIQV), and 333–353 (QIVV…LSTL).

It belongs to the glycosyltransferase 4 family. MraY subfamily. It depends on Mg(2+) as a cofactor.

It is found in the cell inner membrane. It catalyses the reaction UDP-N-acetyl-alpha-D-muramoyl-L-alanyl-gamma-D-glutamyl-meso-2,6-diaminopimeloyl-D-alanyl-D-alanine + di-trans,octa-cis-undecaprenyl phosphate = di-trans,octa-cis-undecaprenyl diphospho-N-acetyl-alpha-D-muramoyl-L-alanyl-D-glutamyl-meso-2,6-diaminopimeloyl-D-alanyl-D-alanine + UMP. It participates in cell wall biogenesis; peptidoglycan biosynthesis. Functionally, catalyzes the initial step of the lipid cycle reactions in the biosynthesis of the cell wall peptidoglycan: transfers peptidoglycan precursor phospho-MurNAc-pentapeptide from UDP-MurNAc-pentapeptide onto the lipid carrier undecaprenyl phosphate, yielding undecaprenyl-pyrophosphoryl-MurNAc-pentapeptide, known as lipid I. This is Phospho-N-acetylmuramoyl-pentapeptide-transferase from Bartonella bacilliformis (strain ATCC 35685 / KC583 / Herrer 020/F12,63).